Reading from the N-terminus, the 115-residue chain is uncharacterized protein (115 aa).

This is an uncharacterized protein from Haemophilus influenzae (strain ATCC 51907 / DSM 11121 / KW20 / Rd).